The primary structure comprises 56 residues: Preprotein translocase subunit SecG (56 aa).

Residues 1–29 (MAKEKATLPPTGAGLMRFFDEDTKAVKIS) lie on the Cytoplasmic side of the membrane. Residues 30-51 (PRGVIALTLILVALEILLHAFG) form a helical membrane-spanning segment. The Extracellular portion of the chain corresponds to 52–56 (PQIFG).

It belongs to the SEC61-beta family. In terms of assembly, component of the protein translocase complex. Heterotrimer consisting of alpha (SecY), beta (SecG) and gamma (SecE) subunits. Can form oligomers of the heterotrimer.

It is found in the cell membrane. Its function is as follows. Involved in protein export. The function of the beta subunit is unknown, but it may be involved in stabilization of the trimeric complex. This chain is Preprotein translocase subunit SecG, found in Thermococcus onnurineus (strain NA1).